A 612-amino-acid chain; its full sequence is Dihydroxy-acid dehydratase (612 aa).

A Mg(2+)-binding site is contributed by Asp-81. Cys-122 is a binding site for [2Fe-2S] cluster. Mg(2+) is bound by residues Asp-123 and Lys-124. An N6-carboxylysine modification is found at Lys-124. Cys-193 serves as a coordination point for [2Fe-2S] cluster. Glu-489 contacts Mg(2+). Ser-515 (proton acceptor) is an active-site residue.

This sequence belongs to the IlvD/Edd family. As to quaternary structure, homodimer. The cofactor is [2Fe-2S] cluster. Requires Mg(2+) as cofactor.

The enzyme catalyses (2R)-2,3-dihydroxy-3-methylbutanoate = 3-methyl-2-oxobutanoate + H2O. It catalyses the reaction (2R,3R)-2,3-dihydroxy-3-methylpentanoate = (S)-3-methyl-2-oxopentanoate + H2O. The protein operates within amino-acid biosynthesis; L-isoleucine biosynthesis; L-isoleucine from 2-oxobutanoate: step 3/4. Its pathway is amino-acid biosynthesis; L-valine biosynthesis; L-valine from pyruvate: step 3/4. Functionally, functions in the biosynthesis of branched-chain amino acids. Catalyzes the dehydration of (2R,3R)-2,3-dihydroxy-3-methylpentanoate (2,3-dihydroxy-3-methylvalerate) into 2-oxo-3-methylpentanoate (2-oxo-3-methylvalerate) and of (2R)-2,3-dihydroxy-3-methylbutanoate (2,3-dihydroxyisovalerate) into 2-oxo-3-methylbutanoate (2-oxoisovalerate), the penultimate precursor to L-isoleucine and L-valine, respectively. The sequence is that of Dihydroxy-acid dehydratase from Xanthomonas oryzae pv. oryzae (strain MAFF 311018).